The primary structure comprises 290 residues: UDP-N-acetylenolpyruvoylglucosamine reductase (290 aa).

The region spanning 20–187 (GVGGESEMWF…SRVRLKLRPS (168 aa)) is the FAD-binding PCMH-type domain. Residue Arg-167 is part of the active site.

This sequence belongs to the MurB family. Requires FAD as cofactor.

It localises to the cytoplasm. The catalysed reaction is UDP-N-acetyl-alpha-D-muramate + NADP(+) = UDP-N-acetyl-3-O-(1-carboxyvinyl)-alpha-D-glucosamine + NADPH + H(+). It participates in cell wall biogenesis; peptidoglycan biosynthesis. In terms of biological role, cell wall formation. The sequence is that of UDP-N-acetylenolpyruvoylglucosamine reductase from Deinococcus radiodurans (strain ATCC 13939 / DSM 20539 / JCM 16871 / CCUG 27074 / LMG 4051 / NBRC 15346 / NCIMB 9279 / VKM B-1422 / R1).